Consider the following 769-residue polypeptide: Multiple C2 domain and transmembrane region protein 5 (769 aa).

C2 domains lie at 23–143 (SVTG…PQWY), 184–305 (PEGV…SRWF), and 345–467 (YSSD…THSY). 5 residues coordinate Ca(2+): Asp56, Asp62, Asp109, Asp111, and Asp116. 2 helical membrane passes run 604–624 (IILVLYPELILPTVFLYLFLI) and 712–732 (LFVLFCLIAAIVLYVTPFQVV).

This sequence belongs to the MCTP family. The cofactor is Ca(2+). Highly expressed in roots meristems and shoot apical meristems (SAMs). Observed in flowers.

Its subcellular location is the endoplasmic reticulum membrane. Its function is as follows. May function as a signaling molecule by regulating the trafficking of other regulators. This is Multiple C2 domain and transmembrane region protein 5 from Arabidopsis thaliana (Mouse-ear cress).